The sequence spans 185 residues: Ribosome-recycling factor (185 aa).

The protein belongs to the RRF family.

It is found in the cytoplasm. Responsible for the release of ribosomes from messenger RNA at the termination of protein biosynthesis. May increase the efficiency of translation by recycling ribosomes from one round of translation to another. The sequence is that of Ribosome-recycling factor from Clostridium botulinum (strain Alaska E43 / Type E3).